A 318-amino-acid polypeptide reads, in one-letter code: Curved DNA-binding protein (318 aa).

One can recognise a J domain in the interval 5-69 (DYYKILGVEP…QKRAEFDEIR (65 aa)). The interval 111 to 130 (GGGNPFGGARQQQRSAGRRG) is disordered.

It is found in the cytoplasm. The protein resides in the nucleoid. Its function is as follows. DNA-binding protein that preferentially recognizes a curved DNA sequence. It is probably a functional analog of DnaJ; displays overlapping activities with DnaJ, but functions under different conditions, probably acting as a molecular chaperone in an adaptive response to environmental stresses other than heat shock. Lacks autonomous chaperone activity; binds native substrates and targets them for recognition by DnaK. Its activity is inhibited by the binding of CbpM. The chain is Curved DNA-binding protein from Pseudomonas putida (strain GB-1).